Here is a 742-residue protein sequence, read N- to C-terminus: Phosphoribosylformylglycinamidine synthase subunit PurL (742 aa).

The active site involves histidine 53. Positions 56 and 95 each coordinate ATP. Glutamate 97 serves as a coordination point for Mg(2+). Substrate contacts are provided by residues 98-101 (SHNH) and arginine 120. Histidine 99 functions as the Proton acceptor in the catalytic mechanism. Mg(2+) is bound at residue aspartate 121. Glutamine 245 lines the substrate pocket. Aspartate 275 provides a ligand contact to Mg(2+). 319–321 (ESQ) serves as a coordination point for substrate. Aspartate 502 and glycine 539 together coordinate ATP. Asparagine 540 is a binding site for Mg(2+). Residue serine 542 coordinates substrate.

The protein belongs to the FGAMS family. In terms of assembly, monomer. Part of the FGAM synthase complex composed of 1 PurL, 1 PurQ and 2 PurS subunits.

Its subcellular location is the cytoplasm. It carries out the reaction N(2)-formyl-N(1)-(5-phospho-beta-D-ribosyl)glycinamide + L-glutamine + ATP + H2O = 2-formamido-N(1)-(5-O-phospho-beta-D-ribosyl)acetamidine + L-glutamate + ADP + phosphate + H(+). The protein operates within purine metabolism; IMP biosynthesis via de novo pathway; 5-amino-1-(5-phospho-D-ribosyl)imidazole from N(2)-formyl-N(1)-(5-phospho-D-ribosyl)glycinamide: step 1/2. Its function is as follows. Part of the phosphoribosylformylglycinamidine synthase complex involved in the purines biosynthetic pathway. Catalyzes the ATP-dependent conversion of formylglycinamide ribonucleotide (FGAR) and glutamine to yield formylglycinamidine ribonucleotide (FGAM) and glutamate. The FGAM synthase complex is composed of three subunits. PurQ produces an ammonia molecule by converting glutamine to glutamate. PurL transfers the ammonia molecule to FGAR to form FGAM in an ATP-dependent manner. PurS interacts with PurQ and PurL and is thought to assist in the transfer of the ammonia molecule from PurQ to PurL. The chain is Phosphoribosylformylglycinamidine synthase subunit PurL from Lactobacillus acidophilus (strain ATCC 700396 / NCK56 / N2 / NCFM).